Consider the following 397-residue polypeptide: Acetate kinase (397 aa).

Residue Asn7 coordinates Mg(2+). Lys14 is an ATP binding site. Arg90 contributes to the substrate binding site. The active-site Proton donor/acceptor is the Asp147. Residues 207 to 211 (HLGNG), 282 to 284 (DFR), and 330 to 334 (GLGEN) contribute to the ATP site. Glu383 serves as a coordination point for Mg(2+).

This sequence belongs to the acetokinase family. In terms of assembly, homodimer. It depends on Mg(2+) as a cofactor. Mn(2+) is required as a cofactor.

Its subcellular location is the cytoplasm. The enzyme catalyses acetate + ATP = acetyl phosphate + ADP. The protein operates within metabolic intermediate biosynthesis; acetyl-CoA biosynthesis; acetyl-CoA from acetate: step 1/2. In terms of biological role, catalyzes the formation of acetyl phosphate from acetate and ATP. Can also catalyze the reverse reaction. The protein is Acetate kinase of Clostridium botulinum (strain Langeland / NCTC 10281 / Type F).